The primary structure comprises 254 residues: 3-deoxy-manno-octulosonate cytidylyltransferase (254 aa).

Belongs to the KdsB family.

It is found in the cytoplasm. It carries out the reaction 3-deoxy-alpha-D-manno-oct-2-ulosonate + CTP = CMP-3-deoxy-beta-D-manno-octulosonate + diphosphate. The protein operates within nucleotide-sugar biosynthesis; CMP-3-deoxy-D-manno-octulosonate biosynthesis; CMP-3-deoxy-D-manno-octulosonate from 3-deoxy-D-manno-octulosonate and CTP: step 1/1. Its pathway is bacterial outer membrane biogenesis; lipopolysaccharide biosynthesis. Functionally, activates KDO (a required 8-carbon sugar) for incorporation into bacterial lipopolysaccharide in Gram-negative bacteria. The polypeptide is 3-deoxy-manno-octulosonate cytidylyltransferase (Ectopseudomonas mendocina (strain ymp) (Pseudomonas mendocina)).